The following is a 172-amino-acid chain: Bone marrow stromal antigen 2 (172 aa).

The Cytoplasmic segment spans residues 1 to 26 (MAPSFYHYLPVAMDERWEPKGWSIRR). Lysine 20 is covalently cross-linked (Glycyl lysine isopeptide (Lys-Gly) (interchain with G-Cter in ubiquitin)). Residues 27–47 (WWLVAAILVVLIGVVLVCLIV) traverse the membrane as a helical; Signal-anchor for type II membrane protein segment. Topologically, residues 48-152 (YFANAAHSEA…EISTTVQVNS (105 aa)) are extracellular. 2 N-linked (GlcNAc...) asparagine glycosylation sites follow: asparagine 70 and asparagine 97. Residues 103 to 149 (LRDSLKKKVSQTQEQQARIKELENKIERLNQELENLRTQKEISTTVQ) are a coiled coil. Residue serine 152 is the site of GPI-anchor amidated serine attachment. A propeptide spans 153 to 172 (GGSVVVSSLLVLVAVLFLHF) (removed in mature form).

As to quaternary structure, parallel homodimer; disulfide-linked. May form homotetramers under reducing conditions. Isoform 1 and isoform 2 form homodimers and also heterodimers with each other. Dimerization is essential for its antiviral activity. Interacts (via cytoplasmic domain) with ARHGAP44. Interacts with MMP14 (via C-terminal cytoplasmic tail). Interacts with LILRA4/ILT7. Interacts with RNF115. N-glycosylated. In terms of processing, the GPI anchor is essential for its antiviral activity. As to expression, ubiquitously expressed, with highest levels in brain and liver. Present in liver (at protein level).

The protein localises to the golgi apparatus. The protein resides in the trans-Golgi network. It is found in the cell membrane. Its subcellular location is the late endosome. It localises to the membrane raft. The protein localises to the cytoplasm. The protein resides in the apical cell membrane. In terms of biological role, IFN-induced antiviral host restriction factor which efficiently blocks the release of diverse mammalian enveloped viruses by directly tethering nascent virions to the membranes of infected cells. Acts as a direct physical tether, holding virions to the cell membrane and linking virions to each other. The tethered virions can be internalized by endocytosis and subsequently degraded or they can remain on the cell surface. In either case, their spread as cell-free virions is restricted. Its target viruses belong to diverse families, including retroviridae: human immunodeficiency virus type 1 (HIV-1), mouse mammary tumor virus (MMTV) and murine leukemia virus (MLV), filoviridae: ebola virus (EBOV), arenaviridae: lassa virus (LASV), and rhabdoviridae: vesicular stomatitis virus (VSV). Can inhibit cell surface proteolytic activity of MMP14 causing decreased activation of MMP15 which results in inhibition of cell growth and migration. Can stimulate signaling by LILRA4/ILT7 and consequently provide negative feedback to the production of IFN by plasmacytoid dendritic cells in response to viral infection. Plays a role in the organization of the subapical actin cytoskeleton in polarized epithelial cells. The polypeptide is Bone marrow stromal antigen 2 (Bst2) (Rattus norvegicus (Rat)).